The sequence spans 153 residues: Prefoldin subunit alpha (153 aa).

The protein belongs to the prefoldin subunit alpha family. As to quaternary structure, heterohexamer of two alpha and four beta subunits.

It localises to the cytoplasm. In terms of biological role, molecular chaperone capable of stabilizing a range of proteins. Seems to fulfill an ATP-independent, HSP70-like function in archaeal de novo protein folding. This is Prefoldin subunit alpha from Methanothrix thermoacetophila (strain DSM 6194 / JCM 14653 / NBRC 101360 / PT) (Methanosaeta thermophila).